The chain runs to 129 residues: Follitropin subunit beta (129 aa).

A signal peptide spans methionine 1–cysteine 18. Cystine bridges form between cysteine 21/cysteine 69, cysteine 35/cysteine 84, cysteine 38/cysteine 122, cysteine 46/cysteine 100, cysteine 50/cysteine 102, and cysteine 105/cysteine 112. N-linked (GlcNAc...) asparagine glycosylation is found at asparagine 25 and asparagine 42.

The protein belongs to the glycoprotein hormones subunit beta family. Heterodimer. The active follitropin is a heterodimer composed of an alpha chain/CGA shared with other hormones and a unique beta chain/FSHB shown here.

It localises to the secreted. In terms of biological role, together with the alpha chain CGA constitutes follitropin, the follicle-stimulating hormone, and provides its biological specificity to the hormone heterodimer. Binds FSHR, a G protein-coupled receptor, on target cells to activate downstream signaling pathways. Follitropin is involved in follicle development and spermatogenesis in reproductive organs. This Panthera tigris altaica (Siberian tiger) protein is Follitropin subunit beta (FSHB).